Reading from the N-terminus, the 266-residue chain is Glucosamine-6-phosphate deaminase (266 aa).

The Proton acceptor; for enolization step role is filled by Asp-72. Asp-141 (for ring-opening step) is an active-site residue. Catalysis depends on His-143, which acts as the Proton acceptor; for ring-opening step. The active-site For ring-opening step is Glu-148.

The protein belongs to the glucosamine/galactosamine-6-phosphate isomerase family. NagB subfamily. As to quaternary structure, homohexamer.

The catalysed reaction is alpha-D-glucosamine 6-phosphate + H2O = beta-D-fructose 6-phosphate + NH4(+). It participates in amino-sugar metabolism; N-acetylneuraminate degradation; D-fructose 6-phosphate from N-acetylneuraminate: step 5/5. With respect to regulation, allosterically activated by N-acetylglucosamine 6-phosphate (GlcNAc6P). Functionally, catalyzes the reversible isomerization-deamination of glucosamine 6-phosphate (GlcN6P) to form fructose 6-phosphate (Fru6P) and ammonium ion. The sequence is that of Glucosamine-6-phosphate deaminase from Salmonella typhi.